A 138-amino-acid polypeptide reads, in one-letter code: Large ribosomal subunit protein uL16 (138 aa).

Basic residues predominate over residues 1-13 (MLQPARRKYRKEQ). Residues 1 to 22 (MLQPARRKYRKEQKGRNTGIAT) form a disordered region.

Belongs to the universal ribosomal protein uL16 family. In terms of assembly, part of the 50S ribosomal subunit.

Its function is as follows. Binds 23S rRNA and is also seen to make contacts with the A and possibly P site tRNAs. This chain is Large ribosomal subunit protein uL16, found in Delftia acidovorans (strain DSM 14801 / SPH-1).